A 117-amino-acid polypeptide reads, in one-letter code: Thioredoxin (117 aa).

A Thioredoxin domain is found at 2–116; it reads AISLTEEDFV…FENIIKDFFG (115 aa). A disulfide bond links C40 and C43.

This sequence belongs to the thioredoxin family.

Its function is as follows. Participates in various redox reactions through the reversible oxidation of its active center dithiol to a disulfide and catalyzes dithiol-disulfide exchange reactions. This is Thioredoxin (trxA) from Borreliella burgdorferi (strain ATCC 35210 / DSM 4680 / CIP 102532 / B31) (Borrelia burgdorferi).